The primary structure comprises 145 residues: 3-dehydroquinate dehydratase (145 aa).

Y24 (proton acceptor) is an active-site residue. Substrate contacts are provided by N75, H81, and D88. H101 acts as the Proton donor in catalysis. Substrate contacts are provided by residues 102–103 (IS) and R112.

Belongs to the type-II 3-dehydroquinase family. In terms of assembly, homododecamer.

It carries out the reaction 3-dehydroquinate = 3-dehydroshikimate + H2O. The protein operates within metabolic intermediate biosynthesis; chorismate biosynthesis; chorismate from D-erythrose 4-phosphate and phosphoenolpyruvate: step 3/7. In terms of biological role, catalyzes a trans-dehydration via an enolate intermediate. The polypeptide is 3-dehydroquinate dehydratase (Corynebacterium glutamicum (strain R)).